The following is a 99-amino-acid chain: Malonate decarboxylase acyl carrier protein (99 aa).

Ser25 bears the O-(phosphoribosyl dephospho-coenzyme A)serine mark.

This sequence belongs to the MdcC family. Post-translationally, covalently binds the prosthetic group of malonate decarboxylase.

Its subcellular location is the cytoplasm. In terms of biological role, subunit of malonate decarboxylase, it is an acyl carrier protein to which acetyl and malonyl thioester residues are bound via a 2'-(5''-phosphoribosyl)-3'-dephospho-CoA prosthetic group and turn over during the catalytic mechanism. The protein is Malonate decarboxylase acyl carrier protein of Pseudomonas fluorescens (strain SBW25).